The following is a 228-amino-acid chain: Ribosomal RNA small subunit methyltransferase G (228 aa).

S-adenosyl-L-methionine-binding positions include glycine 89, leucine 94, 140 to 141 (VE), and arginine 159.

The protein belongs to the methyltransferase superfamily. RNA methyltransferase RsmG family.

It localises to the cytoplasm. It carries out the reaction guanosine(527) in 16S rRNA + S-adenosyl-L-methionine = N(7)-methylguanosine(527) in 16S rRNA + S-adenosyl-L-homocysteine. Specifically methylates the N7 position of guanine in position 527 of 16S rRNA. The chain is Ribosomal RNA small subunit methyltransferase G from Burkholderia cenocepacia (strain HI2424).